We begin with the raw amino-acid sequence, 358 residues long: Spermatogenesis-associated protein 22 (358 aa).

4 stretches are compositionally biased toward polar residues: residues 1–12, 30–51, 81–121, and 150–159; these read MKRNLNESSARS, QPLT…DSYG, PASA…TSLR, and QQQKQFQTPE. 3 disordered regions span residues 1 to 51, 81 to 122, and 150 to 172; these read MKRN…DSYG, PASA…SLRT, and QQQK…AEVP.

Component of a multiprotein complex with MEIOB and RPA2. Interacts with MEIOB. Interacts with the complex BRME1:HSF2BP:BRCA2. Specifically expressed in gonadal germ cells, when male and female germ cells progress through prophase of meiosis I.

It localises to the chromosome. Functionally, meiosis-specific protein required for homologous recombination in meiosis I. The chain is Spermatogenesis-associated protein 22 from Mus musculus (Mouse).